The sequence spans 1133 residues: Protein cordon-bleu (1133 aa).

Residues 1–11 (MKARAPPPPGK) show a composition bias toward pro residues. The segment at 1–25 (MKARAPPPPGKPAAQNVHSEQKLPH) is disordered. Phosphoserine occurs at positions 31, 34, 196, 219, 256, and 278. Disordered stretches follow at residues 246-393 (AEHL…SVNG) and 442-568 (QGGI…GQAS). Polar residues predominate over residues 272–301 (CVTTPNSPSLHSRSLTLGPSLSLGNISGMS). The KKRRAP 1 motif lies at 307 to 312 (KKRRAP). A phosphoserine mark is found at serine 330 and serine 333. A KKRRAP 2 motif is present at residues 340–345 (KKRRAP). The span at 345–358 (PAPPPPQPPPPSPV) shows a compositional bias: pro residues. Serine 356 carries the phosphoserine modification. Positions 361–371 (NRKEDKEENRK) are enriched in basic and acidic residues. Composition is skewed to polar residues over residues 382 to 393 (TDTSSLTSSVNG) and 442 to 464 (QGGI…QPFI). The residue at position 447 (serine 447) is a Phosphoserine. Over residues 512–524 (STDDPKAKDKDKM) the composition is skewed to basic and acidic residues. At serine 614 the chain carries Phosphoserine. A disordered region spans residues 664 to 720 (APSTTITATSEKPQRDETKAGFTLTTPEQQPASQEYGAPPEEDRSRPHSAVSCPVKV). 2 stretches are compositionally biased toward polar residues: residues 665–674 (PSTTITATSE) and 686–696 (TLTTPEQQPAS). Serine 924 bears the Phosphoserine mark. 2 disordered regions span residues 942–961 (PSPL…SSIF) and 990–1018 (HTSG…YVEA). WH2 domains are found at residues 981–1001 (LHSA…LRKT) and 1021–1041 (ERSA…LRKV). Positions 993–1010 (GGRDKLRKTAEQASEGRP) are enriched in basic and acidic residues. Residues 1063-1091 (DKPQQEDRGLPPPPALPPPSTPASQVPSA) form a disordered region. Pro residues predominate over residues 1072-1083 (LPPPPALPPPST). Serine 1099 carries the post-translational modification Phosphoserine. The WH2 3 domain occupies 1109–1129 (ARQALMDAIRSGTGAARLRKV).

As to quaternary structure, identified in a complex composed of ACTA1, COBL, GSN AND TMSB4X. Identified in a complex composed of COBL, PACSIN1 and WASL. Interacts with PACSIN1, PACSIN2 and PACSIN3. Interacts (via WH2 domains) with actin monomers. Interacts with both PACSIN1 and DBNL. As to expression, detected in brain (at protein level).

It localises to the cell membrane. It is found in the cytoplasm. Its subcellular location is the cytoskeleton. The protein localises to the cell projection. The protein resides in the ruffle. It localises to the cytosol. Plays an important role in the reorganization of the actin cytoskeleton. Binds to and sequesters actin monomers (G actin). Nucleates actin polymerization by assembling three actin monomers in cross-filament orientation and thereby promotes growth of actin filaments at the barbed end. Can also mediate actin depolymerization at barbed ends and severing of actin filaments. Promotes formation of cell ruffles. Regulates dendrite branching in Purkinje cells. Regulates neuron morphogenesis and increases branching of axons and dendrites. In Rattus norvegicus (Rat), this protein is Protein cordon-bleu (Cobl).